Reading from the N-terminus, the 837-residue chain is MSLSHLYRDGEGHMDDDDDERENFEITDWDLQNEFNPNRQRHWQTKEEATYGVWAERDSDEERPSFGGKRARDYSAPVNFISAGLKKGAAEEAELEDSEDEEKPVKQDDFPKDFGPKKLKTGGNFKPSQKGFAGGTKSFMDFGSWERHTKGIGQKLLQKMGYVPGRGLGKNAQGIINPIEAKQRKGKGAVGAYGSERTTQSLQDFPVVDSEEEAEEEFQKELSQWRKDPSGSKKKPKYSYKTVEELKAKGRISKKLAAPQKELSQVKVIDMTGREQKVYYSYSQISHKHNVPDDGLPLPSQQPPQPGKEAKAPGFALPELEHNLQLLIDLTEQEIIQSDRQLQYERDMVVNLSHELEKMSEVLEHEERVIANLSKVLEMVEECERRLQPSCSNPLTLDECARIFETLQDKYYEEYRMSDRVDLAVAIVYPLMKEYFKEWDPLKDCAYGTQVISRWKTLLENDQLLSHGGQDLSADAFHRLIWEVWMPFVRNIVTQWQPRNCDPMVDFLDSWVHIIPVWILDNILDQLIFPKLQKEVENWNPLTDTVPIHSWVHPWLPLMQARLEPLYSPIRSKLSSALQKWHPSDSSAKLILQPWKDVFTPGSWEAFMVKNIVPKLGMCLGELVINPHQQHMDAFYWVIDWEGMISVSSLVGLLEKHFFPKWLQVLCSWLSNSPNYEEITKWYLGWKSMFSDQVLAHPSVKDKFNEALDIMNRAVSSNVGAYMQPGARENIAYLTHTERRKDFQYEAMQERREAENMAQRGIGVAASSVPMNFKDLIETKAEEHNIVFMPVIGKRHEGKQLYTFGRIVIYIDRGVVFVQGEKTWVPTSLQSLIDMAK.

Basic and acidic residues predominate over residues 1-13 (MSLSHLYRDGEGH). 3 disordered regions span residues 1-31 (MSLS…DWDL), 54-73 (WAER…RARD), and 85-133 (LKKG…KGFA). The segment at 1–50 (MSLSHLYRDGEGHMDDDDDERENFEITDWDLQNEFNPNRQRHWQTKEEAT) is required for interaction with DHX15. S2 carries the phosphoserine modification. Residues 14–28 (MDDDDDERENFEITD) show a composition bias toward acidic residues. A compositionally biased stretch (basic and acidic residues) spans 54 to 64 (WAERDSDEERP). S59 and S98 each carry phosphoserine. The span at 91–102 (EEAELEDSEDEE) shows a compositional bias: acidic residues. Residues 103-116 (KPVKQDDFPKDFGP) show a composition bias toward basic and acidic residues. S144 is subject to Phosphoserine. One can recognise a G-patch domain in the interval 149–195 (TKGIGQKLLQKMGYVPGRGLGKNAQGIINPIEAKQRKGKGAVGAYGS). Disordered stretches follow at residues 183-236 (QRKG…KKKP) and 289-312 (HNVP…EAKA). Residue S210 is modified to Phosphoserine. A compositionally biased stretch (basic and acidic residues) spans 217–231 (EFQKELSQWRKDPSG). Residues 700 to 705 (VKDKFN) carry the Nuclear localization signal motif. Residues 710–734 (IMNRAVSSNVGAYMQPGARENIAYL) form a required for nuclear speckle localization region.

The protein belongs to the TFP11/STIP family. As to quaternary structure, identified in the spliceosome C complex. Found in the Intron Large (IL) complex, a post-mRNA release spliceosomal complex containing the excised intron, U2, U5 and U6 snRNPs, and splicing factors. Interacts with TUFT1. Interacts with DHX15; indicative for a recruitment of DHX15 to the IL complex. Interacts with GCFC2.

Its subcellular location is the cytoplasm. It localises to the nucleus. Involved in pre-mRNA splicing, specifically in spliceosome disassembly during late-stage splicing events. Intron turnover seems to proceed through reactions in two lariat-intron associated complexes termed Intron Large (IL) and Intron Small (IS). In cooperation with DHX15 seems to mediate the transition of the U2, U5 and U6 snRNP-containing IL complex to the snRNP-free IS complex leading to efficient debranching and turnover of excised introns. May play a role in the differentiation of ameloblasts and odontoblasts or in the forming of the enamel extracellular matrix. The sequence is that of Tuftelin-interacting protein 11 (TFIP11) from Canis lupus familiaris (Dog).